A 146-amino-acid chain; its full sequence is UPF0178 protein BcerKBAB4_2842 (146 aa).

This sequence belongs to the UPF0178 family.

The chain is UPF0178 protein BcerKBAB4_2842 from Bacillus mycoides (strain KBAB4) (Bacillus weihenstephanensis).